A 143-amino-acid polypeptide reads, in one-letter code: Flagellar assembly factor FliW (143 aa).

This sequence belongs to the FliW family. In terms of assembly, interacts with translational regulator CsrA and flagellin(s).

The protein resides in the cytoplasm. Its function is as follows. Acts as an anti-CsrA protein, binds CsrA and prevents it from repressing translation of its target genes, one of which is flagellin. Binds to flagellin and participates in the assembly of the flagellum. This Clostridium botulinum (strain 657 / Type Ba4) protein is Flagellar assembly factor FliW.